The chain runs to 1295 residues: Phosphoribosylformylglycinamidine synthase (1295 aa).

A disordered region spans residues 305–327 (WPGAATGSGGEIRDEGATGRGAK). ATP contacts are provided by residues 307–318 (GAATGSGGEIRD), 386–388 (TGY), and A678. 4 residues coordinate Mg(2+): D679, E718, N722, and D884. Residue S886 participates in ATP binding. The Glutamine amidotransferase type-1 domain occupies 1042–1295 (VAVLREQGVN…IFRNARKQLG (254 aa)). The active-site Nucleophile is C1135. Catalysis depends on residues H1260 and E1262.

It in the N-terminal section; belongs to the FGAMS family. In terms of assembly, monomer.

Its subcellular location is the cytoplasm. It carries out the reaction N(2)-formyl-N(1)-(5-phospho-beta-D-ribosyl)glycinamide + L-glutamine + ATP + H2O = 2-formamido-N(1)-(5-O-phospho-beta-D-ribosyl)acetamidine + L-glutamate + ADP + phosphate + H(+). The protein operates within purine metabolism; IMP biosynthesis via de novo pathway; 5-amino-1-(5-phospho-D-ribosyl)imidazole from N(2)-formyl-N(1)-(5-phospho-D-ribosyl)glycinamide: step 1/2. Functionally, phosphoribosylformylglycinamidine synthase involved in the purines biosynthetic pathway. Catalyzes the ATP-dependent conversion of formylglycinamide ribonucleotide (FGAR) and glutamine to yield formylglycinamidine ribonucleotide (FGAM) and glutamate. The protein is Phosphoribosylformylglycinamidine synthase of Salmonella paratyphi A (strain ATCC 9150 / SARB42).